A 385-amino-acid chain; its full sequence is Guanine nucleotide-binding protein alpha-5 subunit (385 aa).

Glycine 2 is lipidated: N-myristoyl glycine. Cysteine 6 is lipidated: S-palmitoyl cysteine. One can recognise a G-alpha domain in the interval arginine 32–glutamate 385. The G1 motif stretch occupies residues lysine 35–threonine 48. GTP contacts are provided by residues glycine 40–serine 47, isoleucine 174–threonine 180, aspartate 199–glutamine 203, asparagine 298–aspartate 301, and alanine 357. Mg(2+) contacts are provided by serine 47 and threonine 180. The tract at residues aspartate 172–threonine 180 is G2 motif. The tract at residues isoleucine 195–lysine 204 is G3 motif. The G4 motif stretch occupies residues methionine 294 to aspartate 301. Positions threonine 355–threonine 360 are G5 motif.

It belongs to the G-alpha family. In terms of assembly, g proteins are composed of 3 units; alpha, beta and gamma. The alpha chain contains the guanine nucleotide binding site.

Functionally, guanine nucleotide-binding proteins (G proteins) are involved as modulators or transducers in various transmembrane signaling systems. This chain is Guanine nucleotide-binding protein alpha-5 subunit (gpa-5), found in Caenorhabditis elegans.